The following is a 366-amino-acid chain: Isocitrate dehydrogenase [NAD] subunit alpha, mitochondrial (366 aa).

The transit peptide at 1-27 (MAGPAWISKVSRLLGAFHNQKQVTRGF) directs the protein to the mitochondrion. The residue at position 77 (Lys77) is an N6-succinyllysine. A Phosphothreonine modification is found at Thr101. Arg115, Arg125, and Arg146 together coordinate substrate. Lys223 bears the N6-acetyllysine mark. Asp233, Asp257, and Asp261 together coordinate Mg(2+). Lys343 carries the post-translational modification N6-acetyllysine; alternate. Lys343 is modified (N6-succinyllysine; alternate). At Lys350 the chain carries N6-succinyllysine.

This sequence belongs to the isocitrate and isopropylmalate dehydrogenases family. As to quaternary structure, heterooligomer of subunits alpha (IDH3A), beta (IDH3B), and gamma (IDH3G) in the apparent ratio of 2:1:1. The heterodimer containing one IDH3A and one IDH3B subunit and the heterodimer containing one IDH3A and one IDH3G subunit assemble into a heterotetramer (which contains two subunits of IDH3A, one of IDH3B and one of IDH3G) and further into the heterooctamer. Requires Mg(2+) as cofactor. Mn(2+) is required as a cofactor.

The protein localises to the mitochondrion. It carries out the reaction D-threo-isocitrate + NAD(+) = 2-oxoglutarate + CO2 + NADH. With respect to regulation, the heterotetramer and the heterodimer composed of IDH3A and IDH3G subunits can be allosterically activated by citrate (CIT) or/and ADP, and the two activators can act independently or synergistically. The heterodimer composed of IDH3A and IDH3B subunits cannot be allosterically regulated and the allosteric regulation of the heterotetramer is through the IDH3G subunit and not the IDH3B subunit. The IDH3G subunit contains the allosteric site which consists of a CIT-binding site and an ADP-binding site, and the binding of CIT and ADP causes conformational changes at the allosteric site which are transmitted to the active site in the catalytic subunit (IDH3A) through a cascade of conformational changes at the heterodimer interface, leading to stabilization of the isocitrate-binding at the active site and thus activation of the enzyme. ATP can activate the heterotetramer and the heterodimer composed of IDH3A and IDH3G subunits at low concentrations but inhibits their activities at high concentrations, whereas ATP exhibits only inhibitory effect on the heterodimer composed of IDH3A and IDH3B subunits. Functionally, catalytic subunit of the enzyme which catalyzes the decarboxylation of isocitrate (ICT) into alpha-ketoglutarate. The heterodimer composed of the alpha (IDH3A) and beta (IDH3B) subunits and the heterodimer composed of the alpha (IDH3A) and gamma (IDH3G) subunits, have considerable basal activity but the full activity of the heterotetramer (containing two subunits of IDH3A, one of IDH3B and one of IDH3G) requires the assembly and cooperative function of both heterodimers. The polypeptide is Isocitrate dehydrogenase [NAD] subunit alpha, mitochondrial (IDH3A) (Sus scrofa (Pig)).